A 201-amino-acid chain; its full sequence is MSRYRGPRFKKIRRLGALPGLTNKRPRAGSDLRNQSRSGKKSQYRIRLEEKQKLRFHYGLTERQLLKYVRIAGKAKGSTGQVLLQLLEMRLDNILFRLGMAPTIPGARQLVNHRHILVNGRIVDIASYRCKPRDIITARDEENSRTLIQNSLDSSSHDELPKHLTLHPFQYKGLVNQIIDSKWVGLKINELLVVEYYSRQT.

Residues 15–43 form a disordered region; sequence LGALPGLTNKRPRAGSDLRNQSRSGKKSQ. The S4 RNA-binding domain occupies 89–152; the sequence is MRLDNILFRL…NSRTLIQNSL (64 aa).

The protein belongs to the universal ribosomal protein uS4 family. In terms of assembly, part of the 30S ribosomal subunit. Contacts protein S5. The interaction surface between S4 and S5 is involved in control of translational fidelity.

The protein resides in the plastid. Its subcellular location is the chloroplast. In terms of biological role, one of the primary rRNA binding proteins, it binds directly to 16S rRNA where it nucleates assembly of the body of the 30S subunit. Its function is as follows. With S5 and S12 plays an important role in translational accuracy. The sequence is that of Small ribosomal subunit protein uS4c (rps4) from Panax ginseng (Korean ginseng).